Here is a 422-residue protein sequence, read N- to C-terminus: 3-phosphoshikimate 1-carboxyvinyltransferase (422 aa).

3-phosphoshikimate contacts are provided by Lys-20, Ser-21, and Arg-25. Lys-20 is a binding site for phosphoenolpyruvate. Positions 90 and 118 each coordinate phosphoenolpyruvate. Residues Ser-161, Ser-162, Gln-163, Ser-189, Asp-305, and Lys-332 each coordinate 3-phosphoshikimate. Gln-163 lines the phosphoenolpyruvate pocket. Asp-305 functions as the Proton acceptor in the catalytic mechanism. Residues Arg-336 and Arg-378 each coordinate phosphoenolpyruvate.

It belongs to the EPSP synthase family. Monomer.

Its subcellular location is the cytoplasm. The catalysed reaction is 3-phosphoshikimate + phosphoenolpyruvate = 5-O-(1-carboxyvinyl)-3-phosphoshikimate + phosphate. Its pathway is metabolic intermediate biosynthesis; chorismate biosynthesis. Its function is as follows. Catalyzes the transfer of the enolpyruvyl moiety of phosphoenolpyruvate (PEP) to the 5-hydroxyl of shikimate-3-phosphate (S3P) to produce enolpyruvyl shikimate-3-phosphate and inorganic phosphate. In Nitrosopumilus maritimus (strain SCM1), this protein is 3-phosphoshikimate 1-carboxyvinyltransferase.